Consider the following 204-residue polypeptide: Casparian strip membrane protein 3 (204 aa).

Residues 1–41 (MKNESTFIDVPADSSSAMKGKAPLIGVAKDHTASGSGGYNR) are Cytoplasmic-facing. A helical membrane pass occupies residues 42–62 (GLSIFDFLLRLAAIVAASVAA). Over 63 to 92 (GTMFTSDETLPFFTQFLQFQAGYDDLPTFQ) the chain is Extracellular. The helical transmembrane segment at 93-113 (FFVISMSLVSGYIVLSLPISV) threads the bilayer. Topologically, residues 114–125 (VTIVRPLAAAPR) are cytoplasmic. A helical transmembrane segment spans residues 126–146 (LLLLVLDTAVMGLTMAAASSA). Topologically, residues 147–204 (AAISYVAHNGNQNTNWLPICQQFGDFCQKTSGGCGLFLCRRRVFHDPGCPLRSRSQRH) are extracellular.

This sequence belongs to the Casparian strip membrane proteins (CASP) family. Homodimer and heterodimers.

It is found in the cell membrane. Regulates membrane-cell wall junctions and localized cell wall deposition. Required for establishment of the Casparian strip membrane domain (CSD) and the subsequent formation of Casparian strips, a cell wall modification of the root endodermis that determines an apoplastic barrier between the intraorganismal apoplasm and the extraorganismal apoplasm and prevents lateral diffusion. The protein is Casparian strip membrane protein 3 of Raphanus sativus (Radish).